Here is a 261-residue protein sequence, read N- to C-terminus: tRNA pseudouridine synthase A (261 aa).

Asp51 acts as the Nucleophile in catalysis. Position 109 (Tyr109) interacts with substrate.

The protein belongs to the tRNA pseudouridine synthase TruA family. In terms of assembly, homodimer.

It catalyses the reaction uridine(38/39/40) in tRNA = pseudouridine(38/39/40) in tRNA. Its function is as follows. Formation of pseudouridine at positions 38, 39 and 40 in the anticodon stem and loop of transfer RNAs. This chain is tRNA pseudouridine synthase A, found in Shewanella loihica (strain ATCC BAA-1088 / PV-4).